We begin with the raw amino-acid sequence, 550 residues long: Glucose-6-phosphate isomerase (550 aa).

Catalysis depends on glutamate 356, which acts as the Proton donor. Catalysis depends on residues histidine 387 and lysine 515.

This sequence belongs to the GPI family.

The protein resides in the cytoplasm. The enzyme catalyses alpha-D-glucose 6-phosphate = beta-D-fructose 6-phosphate. It participates in carbohydrate biosynthesis; gluconeogenesis. Its pathway is carbohydrate degradation; glycolysis; D-glyceraldehyde 3-phosphate and glycerone phosphate from D-glucose: step 2/4. Its function is as follows. Catalyzes the reversible isomerization of glucose-6-phosphate to fructose-6-phosphate. This chain is Glucose-6-phosphate isomerase, found in Vibrio parahaemolyticus serotype O3:K6 (strain RIMD 2210633).